The chain runs to 432 residues: Polypyrimidine tract-binding protein homolog 3 (432 aa).

4 RRM domains span residues 6–80 (KVVH…FSSH), 98–187 (NRIL…YNND), 245–319 (CTVL…FSKH), and 355–429 (KMIH…FSQL).

It is found in the nucleus. Its function is as follows. Plays a role in pre-mRNA splicing. Binds to the polypyrimidine tract of introns. May promote the binding of U2 snRNP to pre-mRNA. This Arabidopsis thaliana (Mouse-ear cress) protein is Polypyrimidine tract-binding protein homolog 3.